The following is a 1092-amino-acid chain: MPAGSNEPDGVLSYQRPDEEAVVDQGGTSTILNIHYEKEELEGHRTLYVGVRMPLGRQSHRHHRTHGQKHRRRGGRGKGASQGEEGLEASAHDTPSQRVQFILGTEEDEEHVPHELFTELDEICMKEGEEAEWKETARWLKFEEDVEDGGERWSKPYVATLSLHSLFELRSCLINGSVLLDMRASSIEEISDLILDQQELLRDLSDSVRVKVREALLKKHHHQNEKKRNNLIPIVRSFAEVGKKQSDPHSMDRDGQTVSPQSAPATNLEVKNGVNCEHSPVDLSKADLHFMKKIPAGAEASNVLVGEVDTLDRPIVAFVRLSPAVLLSGLTEVPIPTRFLFILLGPVGKGQQYHEIGRSMATIMTDEIFHDVAYKAKERDDLLAGIDEFLDQVTVLPPGEWDPSIRIEPPKNVPSQEKRKMPGVPNGNICHVEPEPHGGHSGPELERTGRLFGGLVLDVKRKAPWYWSDYRDALSLQCLASFLFLYCACMSPVITFGGLLGEATEGRISAIESLFGASMTGIAYSLFAGQPLTILGSTGPVLVFEKILFKFCKDYALSYLSLRACIGLWTAFLCIVLVATDASSLVCYITRFTEEAFASLICIIFIYEAIEKLIHLAETYPIHMHSQLDHLSLYYCRCALPENPNNHTLQYWKEHSIPTADVNWANLTVSECQEMHGEFIGSACGHHGPYTPDVLFWSCILFFATFIVSSTLKTFKTSRYFPTRVRSTVSDFAVFLTIFTMVILDFLIGVPSPKLQVPSVFKPTRDDRGWFISPIGPNPWWTVIAAIIPALLCTILIFMDQQITAVIINRKEHKLKKGCGYHLDLLVVAIMLGVCSLMGLPWFVAATVLSITHVNSLKLESECSAPGEQPKFLGIREQRVTGLMIFVLMGCSVFMTAVLKFIPMPVLYGVFLYMGVSSLQGIQFFDRLKLFGMPAKHQPDFIYLRHVPLRKVHLFTLVQLTCLVLLWVIKASPAAIVFPMMVLALVFVRKVMDLCFSKRELSWLDDLMPESKKKKLDDAKKKEEEEEAEKMLDIGGDKFPLESRKLLSSPGKNNSFRCDPSEINISDEMPKTTVWKALSINSGNTKEKSPFN.

3 disordered regions span residues 1 to 26, 55 to 95, and 243 to 263; these read MPAGSNEPDGVLSYQRPDEEAVVDQG, LGRQ…HDTP, and KKQSDPHSMDRDGQTVSPQSA. Residues 1 to 478 are Extracellular-facing; that stretch reads MPAGSNEPDG…DYRDALSLQC (478 aa). The segment covering 58–76 has biased composition (basic residues); the sequence is QSHRHHRTHGQKHRRRGGR. Basic and acidic residues predominate over residues 243-255; sequence KKQSDPHSMDRDG. A helical transmembrane segment spans residues 479–499; that stretch reads LASFLFLYCACMSPVITFGGL. The Cytoplasmic portion of the chain corresponds to 500 to 507; sequence LGEATEGR. A helical transmembrane segment spans residues 508 to 528; it reads ISAIESLFGASMTGIAYSLFA. Topologically, residues 529–565 are extracellular; the sequence is GQPLTILGSTGPVLVFEKILFKFCKDYALSYLSLRAC. Residues 566–586 form a helical membrane-spanning segment; that stretch reads IGLWTAFLCIVLVATDASSLV. At 587–595 the chain is on the cytoplasmic side; sequence CYITRFTEE. Residues 596-616 form a helical membrane-spanning segment; sequence AFASLICIIFIYEAIEKLIHL. The Extracellular segment spans residues 617–687; that stretch reads AETYPIHMHS…EFIGSACGHH (71 aa). Cystine bridges form between cysteine 636–cysteine 684 and cysteine 638–cysteine 672. N-linked (GlcNAc) asparagine glycosylation is found at asparagine 646 and asparagine 666. The chain crosses the membrane as a helical span at residues 688–708; sequence GPYTPDVLFWSCILFFATFIV. The Cytoplasmic portion of the chain corresponds to 709 to 731; the sequence is SSTLKTFKTSRYFPTRVRSTVSD. Residues 732–752 traverse the membrane as a helical segment; the sequence is FAVFLTIFTMVILDFLIGVPS. At 753 to 778 the chain is on the extracellular side; the sequence is PKLQVPSVFKPTRDDRGWFISPIGPN. Residues 779–799 traverse the membrane as a helical segment; that stretch reads PWWTVIAAIIPALLCTILIFM. At 800 to 824 the chain is on the cytoplasmic side; it reads DQQITAVIINRKEHKLKKGCGYHLD. The helical transmembrane segment at 825–845 threads the bilayer; it reads LLVVAIMLGVCSLMGLPWFVA. Residues 846-881 lie on the Extracellular side of the membrane; the sequence is ATVLSITHVNSLKLESECSAPGEQPKFLGIREQRVT. A helical membrane pass occupies residues 882–902; that stretch reads GLMIFVLMGCSVFMTAVLKFI. The Cytoplasmic portion of the chain corresponds to 903–904; that stretch reads PM. Residues 905-925 traverse the membrane as a helical segment; the sequence is PVLYGVFLYMGVSSLQGIQFF. Over 926–962 the chain is Extracellular; it reads DRLKLFGMPAKHQPDFIYLRHVPLRKVHLFTLVQLTC. Residues 963–983 form a helical membrane-spanning segment; that stretch reads LVLLWVIKASPAAIVFPMMVL. Residues 984–1092 are Cytoplasmic-facing; the sequence is ALVFVRKVMD…GNTKEKSPFN (109 aa).

It belongs to the anion exchanger (TC 2.A.31) family. In terms of assembly, homodimer. As to expression, expressed in the Purkinje cells and dendrites in the molecular layer of the cerebellum (at protein level). Expressed in the hippocampal neurons (at protein level). Strong expression observed in testis and moderate expression in kidney inner medulla, the submandibular gland, eye, cerebrum and cerebellum.

It is found in the cell membrane. The protein localises to the apical cell membrane. It localises to the basolateral cell membrane. The protein resides in the cytoplasmic vesicle. Its subcellular location is the secretory vesicle. It is found in the synaptic vesicle membrane. It carries out the reaction 2 hydrogencarbonate(out) + chloride(in) + Na(+)(out) = 2 hydrogencarbonate(in) + chloride(out) + Na(+)(in). Mediates electroneutral sodium- and carbonate-dependent chloride-HCO3(-) exchange with a Na(+):HCO3(-) stoichiometry of 2:1. Plays a major role in pH regulation in neurons. Mediates sodium reabsorption in the renal cortical collecting ducts. The chain is Electroneutral sodium bicarbonate exchanger 1 from Rattus norvegicus (Rat).